The following is a 700-amino-acid chain: Polyphosphate kinase (700 aa).

Asparagine 45 provides a ligand contact to ATP. The Mg(2+) site is built by arginine 373 and arginine 403. Residues 428–462 (PGMKIHAKLLLITRREEQGFVRYAHIGTGNFHERT) form the PLD phosphodiesterase 1 domain. Catalysis depends on histidine 433, which acts as the Phosphohistidine intermediate. 3 residues coordinate ATP: tyrosine 466, arginine 562, and histidine 590. The PLD phosphodiesterase 2 domain maps to 585–615 (DRFLEHPRVLVVHNDGDPQVFISSADWMERN).

The protein belongs to the polyphosphate kinase 1 (PPK1) family. The cofactor is Mg(2+). An intermediate of this reaction is the autophosphorylated ppk in which a phosphate is covalently linked to a histidine residue through a N-P bond.

The catalysed reaction is [phosphate](n) + ATP = [phosphate](n+1) + ADP. Functionally, catalyzes the reversible transfer of the terminal phosphate of ATP to form a long-chain polyphosphate (polyP). This chain is Polyphosphate kinase, found in Vibrio vulnificus (strain CMCP6).